The chain runs to 392 residues: 8-amino-7-oxononanoate synthase (392 aa).

A substrate-binding site is contributed by arginine 26. 113-114 lines the pyridoxal 5'-phosphate pocket; it reads GY. Histidine 138 lines the substrate pocket. Pyridoxal 5'-phosphate contacts are provided by serine 186, histidine 214, and threonine 241. Position 244 is an N6-(pyridoxal phosphate)lysine (lysine 244). Threonine 353 is a binding site for substrate.

Belongs to the class-II pyridoxal-phosphate-dependent aminotransferase family. BioF subfamily. As to quaternary structure, homodimer. The cofactor is pyridoxal 5'-phosphate.

The enzyme catalyses 6-carboxyhexanoyl-[ACP] + L-alanine + H(+) = (8S)-8-amino-7-oxononanoate + holo-[ACP] + CO2. Its pathway is cofactor biosynthesis; biotin biosynthesis. Functionally, catalyzes the decarboxylative condensation of pimeloyl-[acyl-carrier protein] and L-alanine to produce 8-amino-7-oxononanoate (AON), [acyl-carrier protein], and carbon dioxide. This chain is 8-amino-7-oxononanoate synthase, found in Maricaulis maris (strain MCS10) (Caulobacter maris).